A 500-amino-acid polypeptide reads, in one-letter code: Cytochrome P450 71B9 (500 aa).

A helical transmembrane segment spans residues 1–21; that stretch reads MATIWFLSLLFLCCILLAAFK. Cysteine 440 provides a ligand contact to heme.

Belongs to the cytochrome P450 family. Requires heme as cofactor.

The protein localises to the membrane. This chain is Cytochrome P450 71B9 (CYP71B9), found in Arabidopsis thaliana (Mouse-ear cress).